The sequence spans 280 residues: MHPGDGHTAACLIGWPAAHSRSPLIHHYWLRTLGIPGGYSIESVPPEGFAEFVLNLRAHGYSGANVTIPHKERALQLTQPDDRARAVGAANTLYYDGDVLRSTNTDVEGFIANLDASAPGWDRTPHAVVLGAGGSARAVLFGLLERGIERIALANRSLERAQALADLFGERVVPIAWTDAPAALPGAGLLVNTTSLGMKGQPSLDLDLEPLPSDATVADLVYVPLETELLAEARGRGLRTADGLGMLLHQAVRGFELWFGARPHVTAELRALVEADLAAK.

Shikimate-binding positions include 20–22 (SRS) and Thr67. Catalysis depends on Lys71, which acts as the Proton acceptor. Residue Asp82 coordinates NADP(+). The shikimate site is built by Asn91 and Asp106. Residues 131 to 135 (GAGGS) and Leu220 each bind NADP(+). Tyr222 contributes to the shikimate binding site. Gly243 is an NADP(+) binding site.

Belongs to the shikimate dehydrogenase family. As to quaternary structure, homodimer.

The enzyme catalyses shikimate + NADP(+) = 3-dehydroshikimate + NADPH + H(+). The protein operates within metabolic intermediate biosynthesis; chorismate biosynthesis; chorismate from D-erythrose 4-phosphate and phosphoenolpyruvate: step 4/7. Its function is as follows. Involved in the biosynthesis of the chorismate, which leads to the biosynthesis of aromatic amino acids. Catalyzes the reversible NADPH linked reduction of 3-dehydroshikimate (DHSA) to yield shikimate (SA). The protein is Shikimate dehydrogenase (NADP(+)) of Rhodopseudomonas palustris (strain HaA2).